The following is a 131-amino-acid chain: Small ribosomal subunit protein uS8 (131 aa).

This sequence belongs to the universal ribosomal protein uS8 family. Part of the 30S ribosomal subunit. Contacts proteins S5 and S12.

In terms of biological role, one of the primary rRNA binding proteins, it binds directly to 16S rRNA central domain where it helps coordinate assembly of the platform of the 30S subunit. This is Small ribosomal subunit protein uS8 from Nautilia profundicola (strain ATCC BAA-1463 / DSM 18972 / AmH).